The sequence spans 88 residues: Small ribosomal subunit protein uS17 (88 aa).

Belongs to the universal ribosomal protein uS17 family. In terms of assembly, part of the 30S ribosomal subunit.

One of the primary rRNA binding proteins, it binds specifically to the 5'-end of 16S ribosomal RNA. The chain is Small ribosomal subunit protein uS17 from Syntrophotalea carbinolica (strain DSM 2380 / NBRC 103641 / GraBd1) (Pelobacter carbinolicus).